Consider the following 691-residue polypeptide: MIKKTFLVEIGTEELPSNILKKIILVFYKNFVDELSFNKILYKNINYFSTPRRLALQIIELDTSEKINEKIKKGPAIKHAFDENGNPTKAAYYWAKSCKINLNQAERLKTKTGEWIIHRIQEKKEKIELLFPKIIEKILKQINLKNTMRWETTNLRFIRPIRNIVMLLDEKIIKSEVFNVPSNNFLYHHISCKEEKIYIKNAIEYPAVLFKKNKIIANYETRKEKIKYEAKKIAKKVDGIIKTNPFLLEEVTSLVESPQALLARFKKDYINYIPKKILIHTIEKQQRCFSIYSNNSKKEILPYFIFISNIKSKKNKEIILGNEKVMHARLSDAMFFLKQDRKRKLENYLPFLKKVSFYNNLGTLYEKTLRLKLLIESISCYTNTINKNDLIRSAVLSKCDLITQMVDEFPELQGTIGMYYALENKENKEVAIAIKEQYLPSFSGDELPSTPIGCLLSISDKIDTLSGMFAIGETPTPEKDPFGLRRAALGILRIIITKKIPIDLKKIIEISLKIYTFKKVNYSIISKKIIKFFISRLSFFYEKKGYSTKVIKSVLSCKLTEPLDIDKRINAISDLKKIESIILIAKRIDNIVKNNHQIISSEIHVELMKKTEEKNLLKEIKIFNSKTKELFIQKKYKEILVEIKKLEKPIDNFFDKVQINHSNFEIRQNRLLLLIKIQKFFLKIANFSYLY.

This sequence belongs to the class-II aminoacyl-tRNA synthetase family. In terms of assembly, tetramer of two alpha and two beta subunits.

The protein resides in the cytoplasm. It catalyses the reaction tRNA(Gly) + glycine + ATP = glycyl-tRNA(Gly) + AMP + diphosphate. The polypeptide is Glycine--tRNA ligase beta subunit (Buchnera aphidicola subsp. Schizaphis graminum (strain Sg)).